The sequence spans 195 residues: MEKFITLFSTAVPLFIDNIDTDQIIPARFLKLTTKSDFGKNLFRDWRYDSNGKIKKNFILNKKKYSGNILITGKNFGCGSSREHAAWAIRDYGFKVVISNIFADIFKQNALNNGLLTIELKKDFINLIYKKIFLNPNILFEINLEQQYVKFENNKELFKIDDFKKKCFINGYDDIELLFSIKKKIEIFEKKNIYN.

This sequence belongs to the LeuD family. LeuD type 1 subfamily. Heterodimer of LeuC and LeuD.

The catalysed reaction is (2R,3S)-3-isopropylmalate = (2S)-2-isopropylmalate. It participates in amino-acid biosynthesis; L-leucine biosynthesis; L-leucine from 3-methyl-2-oxobutanoate: step 2/4. In terms of biological role, catalyzes the isomerization between 2-isopropylmalate and 3-isopropylmalate, via the formation of 2-isopropylmaleate. The chain is 3-isopropylmalate dehydratase small subunit from Karelsulcia muelleri (strain GWSS) (Sulcia muelleri).